Here is a 60-residue protein sequence, read N- to C-terminus: uncharacterized protein (60 aa).

This is an uncharacterized protein from Dryophytes versicolor (chameleon treefrog).